The sequence spans 1015 residues: Probable beta-galactosidase B (1015 aa).

Residues 1–21 form the signal peptide; the sequence is MAHIYRLLLLLLSNLWFSAAA. N-linked (GlcNAc...) asparagine glycosylation occurs at Asn23. Tyr90 contributes to the substrate binding site. Asn100 carries N-linked (GlcNAc...) asparagine glycosylation. Substrate-binding residues include Asn135, Ala136, and Glu137. The N-linked (GlcNAc...) asparagine glycan is linked to Asn172. Asn195 serves as a coordination point for substrate. Catalysis depends on Glu196, which acts as the Proton donor. N-linked (GlcNAc...) asparagine glycosylation occurs at Asn211. Substrate is bound at residue Tyr265. An intrachain disulfide couples Cys271 to Cys324. Residue Glu308 is the Nucleophile of the active site. Tyr373 serves as a coordination point for substrate. 9 N-linked (GlcNAc...) asparagine glycosylation sites follow: Asn411, Asn441, Asn456, Asn554, Asn679, Asn735, Asn775, Asn821, and Asn878.

Belongs to the glycosyl hydrolase 35 family.

It is found in the secreted. The catalysed reaction is Hydrolysis of terminal non-reducing beta-D-galactose residues in beta-D-galactosides.. Functionally, cleaves beta-linked terminal galactosyl residues from gangliosides, glycoproteins, and glycosaminoglycans. The chain is Probable beta-galactosidase B (lacB) from Neosartorya fischeri (strain ATCC 1020 / DSM 3700 / CBS 544.65 / FGSC A1164 / JCM 1740 / NRRL 181 / WB 181) (Aspergillus fischerianus).